The following is a 164-amino-acid chain: R-phycoerythrin alpha chain (164 aa).

Positions 82 and 139 each coordinate (2R,3E)-phycoerythrobilin.

It belongs to the phycobiliprotein family. As to quaternary structure, heterodimer of an alpha and a beta chain. Post-translationally, contains two covalently linked bilin chromophores.

The protein resides in the plastid. Its subcellular location is the chloroplast thylakoid membrane. Its function is as follows. Light-harvesting photosynthetic bile pigment-protein from the phycobiliprotein complex. This chain is R-phycoerythrin alpha chain (cpeA), found in Porphyra purpurea (Red seaweed).